The sequence spans 1138 residues: BMP-2-inducible protein kinase (1138 aa).

Phosphoserine is present on Ser13. One can recognise a Protein kinase domain in the interval 48-313; it reads VTLEESLAEG…DIFQVSYFAF (266 aa). ATP-binding positions include 54-62 and Lys76; that span reads LAEGGFSTV. Asp177 (proton acceptor) is an active-site residue. 3 disordered regions span residues 355–435, 638–831, and 906–1018; these read TDTI…RVLQ, NRLG…PADA, and PRSV…EFLT. The span at 358–390 shows a compositional bias: polar residues; sequence IGPTETSIAPRQRPKANSTAATSSVLTIQSSAT. The span at 417–435 shows a compositional bias: low complexity; it reads VLMVQGPPQQPPQQHRVLQ. Position 676 is a phosphoserine (Ser676). The span at 684–701 shows a compositional bias: polar residues; that stretch reads HSPNQKSITANLTKNGGS. A compositionally biased stretch (basic and acidic residues) spans 706–715; it reads KDQRAGKKTS. Residues Ser733, Ser806, and Ser807 each carry the phosphoserine modification. Over residues 787–813 the composition is skewed to basic and acidic residues; it reads DKHSSDSECEQAKTKRGDTSSLRRDKP. Thr819 carries the phosphothreonine modification. Ser908 carries the phosphoserine modification. The span at 915 to 926 shows a compositional bias: polar residues; sequence TPFQPFSVSASK. Residues 951–965 are compositionally biased toward basic residues; the sequence is VKQRSLQKLSSRQRR. Residues Ser1010, Ser1012, Ser1013, Ser1020, Ser1022, Ser1087, and Ser1091 each carry the phosphoserine modification. The tract at residues 1117 to 1138 is disordered; it reads TPQQSQPVELDPFGAAPFPSKQ.

This sequence belongs to the protein kinase superfamily. Ser/Thr protein kinase family. Post-translationally, autophosphorylated. As to expression, expressed in osteocytes and osteoblasts.

Its subcellular location is the nucleus. The catalysed reaction is L-seryl-[protein] + ATP = O-phospho-L-seryl-[protein] + ADP + H(+). It catalyses the reaction L-threonyl-[protein] + ATP = O-phospho-L-threonyl-[protein] + ADP + H(+). May be involved in osteoblast differentiation. This is BMP-2-inducible protein kinase (Bmp2k) from Mus musculus (Mouse).